The sequence spans 1169 residues: MAEEEVAKLEKHLMLLRQEYVKLQKKLAETEKRCALLAAQANKESSSESFISRLLAIVADLYEQEQYSDLKIKVGDRHISAHKFVLAARSDSWSLANLSSTKELDLSDANPEVTMTMLRWIYTDELEFREDDVFLTELMKLANRFQLQLLRERCEKGVMSLVNVRNCIRFYQTAEELNASTLMNYCAEIIASHWDDLRKEDFSSMSAQLLYKMIKSKTEYPLHKAIKVEREDVVFLYLIEMDSQLPGKLNEADHNGDLALDLALSRRLESIATTLVSHKADVDMVDKSGWSLLHKGIQRGDLFAATFLIKNGAFVNAATLGAQETPLHLVALYSSKKHSADVMSEMAQIAEALLQAGANPNMQDSKGRTPLHVSIMAGNEYVFSQLLQCKQLDLELKDHEGSTALWLAVQHITVSSDQSVNPFEDVPVVNGTSFDENSFAARLIQRGSHTDAPDTATGNCLLQRAAGAGNEAAALFLATNGAHVNHRNKWGETPLHTACRHGLANLTAELLQQGANPNLQTEEALPLPKEAASLTSLADSVHLQTPLHMAIAYNHPDVVSVILEQKANALHATNNLQIIPDFSLKDSRDQTVLGLALWTGMHTIAAQLLGSGAAINDTMSDGQTLLHMAIQRQDSKSALFLLEHQADINVRTQDGETALQLAIRNQLPLVVDAICTRGADMSVPDEKGNPPLWLALANNLEDIASTLVRHGCDATCWGPGPGGCLQTLLHRAIDENNEPTACFLIRSGCDVNSPRQPGANGEGEEEARDGQTPLHLAASWGLEETVQCLLEFGANVNAQDAEGRTPIHVAISSQHGVIIQLLVSHPDIHLNVRDRQGLTPFACAMTFKNNKSAEAILKRESGAAEQVDNKGRNFLHVAVQNSDIESVLFLISVHANVNSRVQDASKLTPLHLAVQAGSEIIVRNLLLAGAKVNELTKHRQTALHLAAQQDLPTICSVLLENGVDFAAVDENGNNALHLAVMHGRLNNIRVLLTECTVDAEAFNLRGQSPLHILGQYGKENAAAIFDLFLECMPGYPLDKPDADGSTVLLLAYMKGNANLCRAIVRSGARLGVNNNQGVNIFNYQVATKQLLFRLLDMLSKEPPWCDGSYCYECTARFGVTTRKHHCRHCGRLLCHKCSTKEIPIIKFDLNKPVRVCNICFDVLTLGGVS.

Position 2 is an N-acetylalanine (A2). Residues 68 to 130 (SDLKIKVGDR…IYTDELEFRE (63 aa)) enclose the BTB domain. ANK repeat units lie at residues 217 to 247 (KTEYPLHKAIKVEREDVVFLYLIEMDSQLPG), 255 to 284 (NGDLALDLALSRRLESIATTLVSHKADVDM), 288 to 317 (SGWSLLHKGIQRGDLFAATFLIKNGAFVNA), 322 to 362 (AQET…NPNM), and 366 to 396 (KGRTPLHVSIMAGNEYVFSQLLQCKQLDLEL). A Phosphoserine modification is found at S270. An NPF motif is present at residues 421–423 (NPF). 16 ANK repeats span residues 490–519 (WGETPLHTACRHGLANLTAELLQQGANPNL), 542–572 (HLQTPLHMAIAYNHPDVVSVILEQKANALHA), 588–617 (RDQTVLGLALWTGMHTIAAQLLGSGAAIND), 621–650 (DGQTLLHMAIQRQDSKSALFLLEHQADINV), 654–683 (DGETALQLAIRNQLPLVVDAICTRGADMSV), 687–716 (KGNPPLWLALANNLEDIASTLVRHGCDATC), 724–753 (CLQTLLHRAIDENNEPTACFLIRSGCDVNS), 769–798 (DGQTPLHLAASWGLEETVQCLLEFGANVNA), 802–832 (EGRTPIHVAISSQHGVIIQLLVSHPDIHLNV), 836–865 (QGLTPFACAMTFKNNKSAEAILKRESGAAE), 870–899 (KGRNFLHVAVQNSDIESVLFLISVHANVNS), 905–934 (SKLTPLHLAVQAGSEIIVRNLLLAGAKVNE), 938–967 (HRQTALHLAAQQDLPTICSVLLENGVDFAA), 971–1001 (NGNNALHLAVMHGRLNNIRVLLTECTVDAEA), 1005–1037 (RGQSPLHILGQYGKENAAAIFDLFLECMPGYPL), and 1043–1072 (DGSTVLLLAYMKGNANLCRAIVRSGARLGV). Positions 650-759 (VRTQDGETAL…DVNSPRQPGA (110 aa)) are interaction with RHOD and RAB5A. The FYVE-type zinc finger occupies 1104–1164 (WCDGSYCYEC…VCNICFDVLT (61 aa)). Zn(2+) is bound by residues C1110, C1113, C1126, C1129, C1134, C1137, C1156, and C1159.

In terms of assembly, interacts with RAB5A (in GTP-bound form). Interacts with RHOD (independent of GTP-loaded status). Interacts with EHD1. Interacts with VPS26A; the interaction is independent of EHD1 and is indicative for an association with the cargo recognition subcomplex of the retromer complex. In terms of tissue distribution, high expression in whole adult brain and intermediate expression in all other tissues and specific brain regions examined, including fetal brain.

The protein localises to the cytoplasm. Its subcellular location is the endosome membrane. The protein resides in the early endosome. Functionally, proposed effector of Rab5. Binds to phosphatidylinositol 3-phosphate (PI(3)P). Involved in homotypic early endosome fusion and to a lesser extent in heterotypic fusion of chlathrin-coated vesicles with early endosomes. Involved in macropinocytosis; the function is dependent on Rab5-GTP. Required for correct endosomal localization. Involved in the internalization and trafficking of activated tyrosine kinase receptors such as PDGFRB. Regulates the subcellular localization of the retromer complex in a EHD1-dependent manner. Involved in endosome-to-Golgi transport and biosynthetic transport to late endosomes and lysosomes indicative for a regulation of retromer complex-mediated retrograde transport. This chain is Rabankyrin-5 (ANKFY1), found in Homo sapiens (Human).